The primary structure comprises 180 residues: ATP-dependent protease subunit HslV (180 aa).

The active site involves Thr-5. Na(+)-binding residues include Gly-161, Cys-164, and Thr-167.

It belongs to the peptidase T1B family. HslV subfamily. In terms of assembly, a double ring-shaped homohexamer of HslV is capped on each side by a ring-shaped HslU homohexamer. The assembly of the HslU/HslV complex is dependent on binding of ATP.

It localises to the cytoplasm. The catalysed reaction is ATP-dependent cleavage of peptide bonds with broad specificity.. Its activity is regulated as follows. Allosterically activated by HslU binding. In terms of biological role, protease subunit of a proteasome-like degradation complex believed to be a general protein degrading machinery. This Campylobacter fetus subsp. fetus (strain 82-40) protein is ATP-dependent protease subunit HslV.